Reading from the N-terminus, the 153-residue chain is Succinate dehydrogenase assembly factor 2, mitochondrial (153 aa).

Belongs to the SDHAF2 family. In terms of assembly, interacts with the flavoprotein subunit within the SDH catalytic dimer.

It is found in the mitochondrion matrix. In terms of biological role, plays an essential role in the assembly of succinate dehydrogenase (SDH), an enzyme complex (also referred to as respiratory complex II) that is a component of both the tricarboxylic acid (TCA) cycle and the mitochondrial electron transport chain, and which couples the oxidation of succinate to fumarate with the reduction of ubiquinone (coenzyme Q) to ubiquinol. Required for flavinylation (covalent attachment of FAD) of the flavoprotein subunit of the SDH catalytic dimer. In Candida glabrata (strain ATCC 2001 / BCRC 20586 / JCM 3761 / NBRC 0622 / NRRL Y-65 / CBS 138) (Yeast), this protein is Succinate dehydrogenase assembly factor 2, mitochondrial.